A 217-amino-acid chain; its full sequence is Uracil-DNA glycosylase (217 aa).

The active-site Proton acceptor is the Asp62.

This sequence belongs to the uracil-DNA glycosylase (UDG) superfamily. UNG family.

The protein localises to the cytoplasm. It carries out the reaction Hydrolyzes single-stranded DNA or mismatched double-stranded DNA and polynucleotides, releasing free uracil.. In terms of biological role, excises uracil residues from the DNA which can arise as a result of misincorporation of dUMP residues by DNA polymerase or due to deamination of cytosine. The sequence is that of Uracil-DNA glycosylase from Streptococcus gordonii (strain Challis / ATCC 35105 / BCRC 15272 / CH1 / DL1 / V288).